The primary structure comprises 552 residues: Nucleolar complex protein 4 (552 aa).

It belongs to the CBF/MAK21 family. Interacts with NOP14 and MPP10. Interacts with snoRNA U3. Component of the ribosomal small subunit (SSU) processome composed of at least 40 protein subunits and snoRNA U3.

The protein resides in the nucleus. It is found in the nucleolus. Involved in nucleolar processing of pre-18S ribosomal RNA and ribosome assembly. Has a role in the nuclear export of 40S pre-ribosomal subunit to the cytoplasm. Its subcellular location and association with pre-40S subunit are unaffected by RPS19 disruptions, suggesting it acts before the ribosomal protein. The polypeptide is Nucleolar complex protein 4 (NOC4) (Saccharomyces cerevisiae (strain ATCC 204508 / S288c) (Baker's yeast)).